The following is a 421-amino-acid chain: MEF2-activating motif and SAP domain-containing transcriptional regulator (421 aa).

The MEF2-binding signature appears at 12 to 28 (IIRSKFRSVLQLRIHRR). Disordered regions lie at residues 104 to 156 (PPEQ…PPSH), 188 to 296 (KAML…ASLT), and 322 to 406 (DQVE…ADLS). The SAP domain maps to 165-199 (LEELTVSELRQQLRLRGLPVSGTKAMLLERMRGGT). Positions 191–214 (LLERMRGGTPPRERPKPRREDKEA) are enriched in basic and acidic residues. Positions 208-421 (RREDKEAAAP…LLWELLPDPW (214 aa)) are transcription activation. Polar residues predominate over residues 230 to 241 (RLPSTVKASATN). Positions 260–292 (ASVPAPTPSPALAPTPTPAPVPAPAPAPFPTPP) are enriched in pro residues. Residues 347–372 (SPDSEGFSSVFSSSLPSPTSSLSPSP) show a composition bias toward low complexity.

In terms of assembly, interacts with MEF2C. As to expression, expressed in skeletal muscle, brain, placenta and spleen.

It localises to the nucleus. In terms of biological role, transcriptional coactivator. Stimulates the transcriptional activity of MEF2C. Stimulates MYOD1 activity in part via MEF2, resulting in an enhancement of skeletal muscle differentiation. This chain is MEF2-activating motif and SAP domain-containing transcriptional regulator (Mamstr), found in Mus musculus (Mouse).